The following is a 109-amino-acid chain: Large ribosomal subunit protein uL24 (109 aa).

The protein belongs to the universal ribosomal protein uL24 family. In terms of assembly, part of the 50S ribosomal subunit.

One of two assembly initiator proteins, it binds directly to the 5'-end of the 23S rRNA, where it nucleates assembly of the 50S subunit. Functionally, one of the proteins that surrounds the polypeptide exit tunnel on the outside of the subunit. This Hamiltonella defensa subsp. Acyrthosiphon pisum (strain 5AT) protein is Large ribosomal subunit protein uL24.